The chain runs to 135 residues: DNA-directed RNA polymerase subunit omega (135 aa).

The protein belongs to the RNA polymerase subunit omega family. As to quaternary structure, the RNAP catalytic core consists of 2 alpha, 1 beta, 1 beta' and 1 omega subunit. When a sigma factor is associated with the core the holoenzyme is formed, which can initiate transcription.

The enzyme catalyses RNA(n) + a ribonucleoside 5'-triphosphate = RNA(n+1) + diphosphate. Its function is as follows. Promotes RNA polymerase assembly. Latches the N- and C-terminal regions of the beta' subunit thereby facilitating its interaction with the beta and alpha subunits. This Sinorhizobium medicae (strain WSM419) (Ensifer medicae) protein is DNA-directed RNA polymerase subunit omega.